A 335-amino-acid chain; its full sequence is Glyceraldehyde-3-phosphate dehydrogenase (335 aa).

NAD(+) is bound by residues 13–14 (TI) and G111. 140–142 (SCN) contacts D-glyceraldehyde 3-phosphate. C141 functions as the Nucleophile in the catalytic mechanism. R169 contacts NAD(+). Residues T171 and 195–196 (HG) each bind D-glyceraldehyde 3-phosphate. Position 300 (Q300) interacts with NAD(+).

Belongs to the glyceraldehyde-3-phosphate dehydrogenase family. Homotetramer.

The protein resides in the cytoplasm. The enzyme catalyses D-glyceraldehyde 3-phosphate + phosphate + NADP(+) = (2R)-3-phospho-glyceroyl phosphate + NADPH + H(+). The catalysed reaction is D-glyceraldehyde 3-phosphate + phosphate + NAD(+) = (2R)-3-phospho-glyceroyl phosphate + NADH + H(+). It functions in the pathway carbohydrate degradation; glycolysis; pyruvate from D-glyceraldehyde 3-phosphate: step 1/5. The sequence is that of Glyceraldehyde-3-phosphate dehydrogenase from Methanosarcina mazei (strain ATCC BAA-159 / DSM 3647 / Goe1 / Go1 / JCM 11833 / OCM 88) (Methanosarcina frisia).